Here is a 972-residue protein sequence, read N- to C-terminus: Multiple C2 domain and transmembrane region protein 8 (972 aa).

The 107-residue stretch at 1–107 (MMSNLKLGVE…PYSEAVGLPY (107 aa)) folds into the C2 1 domain. A disordered region spans residues 142–203 (PNLISTKKIP…MMESSLYQAP (62 aa)). Positions 150–159 (IPSKSRHKFH) are enriched in basic residues. A compositionally biased stretch (polar residues) spans 161-173 (IPTNESNHSPRGN). The segment covering 179 to 194 (PQPPPPQSQTALPPPM) has biased composition (pro residues). C2 domains follow at residues 232-352 (GGGK…PEWY), 384-507 (ALNA…NRWF), and 543-669 (YSSD…SHSY). Positions 265, 271, 318, 320, and 325 each coordinate Ca(2+). 2 helical membrane-spanning segments follow: residues 803–823 (IIFL…SLCL) and 924–944 (TVVL…LYIM).

The protein belongs to the MCTP family. Ca(2+) is required as a cofactor. As to expression, expressed in root hairs.

It is found in the membrane. The protein localises to the vesicle. In terms of biological role, may function as a signaling molecule by regulating the trafficking of other regulators. In Arabidopsis thaliana (Mouse-ear cress), this protein is Multiple C2 domain and transmembrane region protein 8.